The sequence spans 152 residues: Cell division protein SepF (152 aa).

Belongs to the SepF family. In terms of assembly, homodimer. Interacts with FtsZ.

Its subcellular location is the cytoplasm. Cell division protein that is part of the divisome complex and is recruited early to the Z-ring. Probably stimulates Z-ring formation, perhaps through the cross-linking of FtsZ protofilaments. Its function overlaps with FtsA. The polypeptide is Cell division protein SepF (Listeria monocytogenes serotype 4b (strain CLIP80459)).